The sequence spans 656 residues: DNA ligase (656 aa).

NAD(+)-binding positions include 32–36 (DAVYD) and 81–82 (SL). Lysine 112 functions as the N6-AMP-lysine intermediate in the catalytic mechanism. Residues arginine 133, glutamate 167, and lysine 306 each coordinate NAD(+). Positions 400, 403, 416, and 421 each coordinate Zn(2+). Positions 577–656 (KSSSVFNNKT…ELLKRLKELD (80 aa)) constitute a BRCT domain.

It belongs to the NAD-dependent DNA ligase family. LigA subfamily. Mg(2+) serves as cofactor. It depends on Mn(2+) as a cofactor.

The enzyme catalyses NAD(+) + (deoxyribonucleotide)n-3'-hydroxyl + 5'-phospho-(deoxyribonucleotide)m = (deoxyribonucleotide)n+m + AMP + beta-nicotinamide D-nucleotide.. DNA ligase that catalyzes the formation of phosphodiester linkages between 5'-phosphoryl and 3'-hydroxyl groups in double-stranded DNA using NAD as a coenzyme and as the energy source for the reaction. It is essential for DNA replication and repair of damaged DNA. The protein is DNA ligase of Helicobacter pylori (strain HPAG1).